Consider the following 54-residue polypeptide: UPF0391 membrane protein msr3702 (54 aa).

The next 2 membrane-spanning stretches (helical) occupy residues 4–24 (WALVFLVVAIIAGALGFGGIA) and 30–50 (IAQILFFIFLAFLVISLLAGL).

This sequence belongs to the UPF0391 family.

It is found in the cell membrane. The protein is UPF0391 membrane protein msr3702 of Mesorhizobium japonicum (strain LMG 29417 / CECT 9101 / MAFF 303099) (Mesorhizobium loti (strain MAFF 303099)).